A 663-amino-acid chain; its full sequence is DNA ligase (663 aa).

NAD(+)-binding positions include 31 to 35, 80 to 81, and Glu-110; these read DFEYD and SL. The active-site N6-AMP-lysine intermediate is the Lys-112. NAD(+) is bound by residues Arg-133, Glu-168, Lys-284, and Lys-308. Zn(2+) contacts are provided by Cys-402, Cys-405, Cys-420, and Cys-425. Positions 586-663 constitute a BRCT domain; that stretch reads IKDNRFEGKT…DEDKFRKMIE (78 aa).

Belongs to the NAD-dependent DNA ligase family. LigA subfamily. It depends on Mg(2+) as a cofactor. Requires Mn(2+) as cofactor.

It catalyses the reaction NAD(+) + (deoxyribonucleotide)n-3'-hydroxyl + 5'-phospho-(deoxyribonucleotide)m = (deoxyribonucleotide)n+m + AMP + beta-nicotinamide D-nucleotide.. DNA ligase that catalyzes the formation of phosphodiester linkages between 5'-phosphoryl and 3'-hydroxyl groups in double-stranded DNA using NAD as a coenzyme and as the energy source for the reaction. It is essential for DNA replication and repair of damaged DNA. This is DNA ligase from Acetivibrio thermocellus (strain ATCC 27405 / DSM 1237 / JCM 9322 / NBRC 103400 / NCIMB 10682 / NRRL B-4536 / VPI 7372) (Clostridium thermocellum).